A 209-amino-acid polypeptide reads, in one-letter code: FMN-dependent NADH:quinone oxidoreductase (209 aa).

Residues serine 9 and 15-17 (SNS) each bind FMN.

Belongs to the azoreductase type 1 family. In terms of assembly, homodimer. FMN serves as cofactor.

It catalyses the reaction 2 a quinone + NADH + H(+) = 2 a 1,4-benzosemiquinone + NAD(+). The enzyme catalyses N,N-dimethyl-1,4-phenylenediamine + anthranilate + 2 NAD(+) = 2-(4-dimethylaminophenyl)diazenylbenzoate + 2 NADH + 2 H(+). In terms of biological role, quinone reductase that provides resistance to thiol-specific stress caused by electrophilic quinones. Its function is as follows. Also exhibits azoreductase activity. Catalyzes the reductive cleavage of the azo bond in aromatic azo compounds to the corresponding amines. The protein is FMN-dependent NADH:quinone oxidoreductase of Bordetella parapertussis (strain 12822 / ATCC BAA-587 / NCTC 13253).